The primary structure comprises 193 residues: FMN-dependent NADH:quinone oxidoreductase (193 aa).

FMN is bound by residues S9, S15–S17, and T137–G140.

The protein belongs to the azoreductase type 1 family. As to quaternary structure, homodimer. Requires FMN as cofactor.

The enzyme catalyses 2 a quinone + NADH + H(+) = 2 a 1,4-benzosemiquinone + NAD(+). It carries out the reaction N,N-dimethyl-1,4-phenylenediamine + anthranilate + 2 NAD(+) = 2-(4-dimethylaminophenyl)diazenylbenzoate + 2 NADH + 2 H(+). Functionally, quinone reductase that provides resistance to thiol-specific stress caused by electrophilic quinones. Its function is as follows. Also exhibits azoreductase activity. Catalyzes the reductive cleavage of the azo bond in aromatic azo compounds to the corresponding amines. This Pelagibacter ubique (strain HTCC1062) protein is FMN-dependent NADH:quinone oxidoreductase.